Reading from the N-terminus, the 171-residue chain is UPF0763 protein HPP12_0677 (171 aa).

This sequence belongs to the UPF0763 family.

The chain is UPF0763 protein HPP12_0677 from Helicobacter pylori (strain P12).